Reading from the N-terminus, the 786-residue chain is Endonuclease MutS2 (786 aa).

Position 335 to 342 (335 to 342 (GPNTGGKT)) interacts with ATP. The Smr domain maps to 711 to 786 (LDLRGERFEN…GLGVTVVELK (76 aa)).

This sequence belongs to the DNA mismatch repair MutS family. MutS2 subfamily. Homodimer. Binds to stalled ribosomes, contacting rRNA.

Endonuclease that is involved in the suppression of homologous recombination and thus may have a key role in the control of bacterial genetic diversity. Its function is as follows. Acts as a ribosome collision sensor, splitting the ribosome into its 2 subunits. Detects stalled/collided 70S ribosomes which it binds and splits by an ATP-hydrolysis driven conformational change. Acts upstream of the ribosome quality control system (RQC), a ribosome-associated complex that mediates the extraction of incompletely synthesized nascent chains from stalled ribosomes and their subsequent degradation. Probably generates substrates for RQC. This is Endonuclease MutS2 from Bacillus cereus (strain B4264).